A 137-amino-acid polypeptide reads, in one-letter code: Cellular retinoic acid-binding protein 1 (137 aa).

A Nuclear localization signal motif is present at residues 21 to 31 (KALGVNAMLRK). 132–134 (RIY) provides a ligand contact to all-trans-retinoate.

It belongs to the calycin superfamily. Fatty-acid binding protein (FABP) family.

The protein resides in the cytoplasm. In terms of biological role, cytosolic CRABPs may regulate the access of retinoic acid to the nuclear retinoic acid receptors. The protein is Cellular retinoic acid-binding protein 1 (CRABP1) of Homo sapiens (Human).